A 208-amino-acid chain; its full sequence is Riboflavin synthase (208 aa).

2 Lumazine-binding repeats span residues 1–97 and 98–195; these read MFTG…MGGH and FVQG…EKLV. 2,4-dihydroxypteridine is bound by residues 4-6, 48-50, 62-67, 101-103, lysine 137, 146-148, and 160-165; these read GLV, CLT, GIAPES, GHV, SLT, and MMISYT.

In terms of assembly, homotrimer.

The enzyme catalyses 2 6,7-dimethyl-8-(1-D-ribityl)lumazine + H(+) = 5-amino-6-(D-ribitylamino)uracil + riboflavin. It participates in cofactor biosynthesis; riboflavin biosynthesis; riboflavin from 2-hydroxy-3-oxobutyl phosphate and 5-amino-6-(D-ribitylamino)uracil: step 2/2. In terms of biological role, catalyzes the dismutation of two molecules of 6,7-dimethyl-8-ribityllumazine, resulting in the formation of riboflavin and 5-amino-6-(D-ribitylamino)uracil. The polypeptide is Riboflavin synthase (rib5) (Schizosaccharomyces pombe (strain 972 / ATCC 24843) (Fission yeast)).